The following is a 96-amino-acid chain: Antitoxin ParD4 (96 aa).

The protein belongs to the ParD antitoxin family.

Antitoxin component of a type II toxin-antitoxin (TA) system. Neutralizes the effect of cognate toxin ParE4, but no other RelE or ParE toxin. This Caulobacter vibrioides (strain ATCC 19089 / CIP 103742 / CB 15) (Caulobacter crescentus) protein is Antitoxin ParD4 (parD4).